We begin with the raw amino-acid sequence, 229 residues long: Potassium/proton antiporter CemA (229 aa).

3 consecutive transmembrane segments (helical) span residues 7 to 27, 106 to 126, and 189 to 209; these read LTPL…SLSF, IILH…FFIM, and IISG…KYWI.

The protein belongs to the CemA family.

The protein localises to the plastid. Its subcellular location is the chloroplast inner membrane. The catalysed reaction is K(+)(in) + H(+)(out) = K(+)(out) + H(+)(in). Functionally, contributes to K(+)/H(+) antiport activity by supporting proton efflux to control proton extrusion and homeostasis in chloroplasts in a light-dependent manner to modulate photosynthesis. Prevents excessive induction of non-photochemical quenching (NPQ) under continuous-light conditions. Indirectly promotes efficient inorganic carbon uptake into chloroplasts. The chain is Potassium/proton antiporter CemA from Ceratophyllum demersum (Rigid hornwort).